Here is a 350-residue protein sequence, read N- to C-terminus: C5a anaphylatoxin chemotactic receptor 1 (350 aa).

Residues 1 to 37 (MDSFDYTTPDYGHYDDKDTLDLNTPVDKTSNTLRVPD) lie on the Extracellular side of the membrane. The required for CHIPS binding stretch occupies residues 10–18 (DYGHYDDKD). Sulfotyrosine is present on residues tyrosine 11 and tyrosine 14. The interval 21–30 (DLNTPVDKTS) is involved in C5a binding. The helical transmembrane segment at 38–64 (ILALVIFAVVFLVGVLGNALVVWVTAF) threads the bilayer. Over 65 to 69 (EAKRT) the chain is Cytoplasmic. The chain crosses the membrane as a helical span at residues 70–93 (INAIWFLNLAVADFLSCLALPILF). Topologically, residues 94-110 (TSIVQHHHWPFGGAACS) are extracellular. Cysteines 109 and 188 form a disulfide. Residues 111–132 (ILPSLILLNMYASILLLATISA) form a helical membrane-spanning segment. The Cytoplasmic portion of the chain corresponds to 133-153 (DRFLLVFKPIWCQNFRGAGLA). A helical transmembrane segment spans residues 154–174 (WIACAVAWGLALLLTIPSFLY). Over 175-200 (RVVREEYFPPKVLCGVDYSHDKRRER) the chain is Extracellular. The chain crosses the membrane as a helical span at residues 201-226 (AVAIVRLVLGFLWPLLTLMICYTFIL). At 227-242 (LRTWSRRATRSTKTLK) the chain is on the cytoplasmic side. A helical transmembrane segment spans residues 243 to 265 (VVVAVVASFFIFWLPYQVTGIMM). Residues 266 to 282 (SFLEPSSPTFRLLKKLD) lie on the Extracellular side of the membrane. A helical transmembrane segment spans residues 283 to 303 (SLCVSFAYINCCINPIIYVVA). Residues 304–350 (GQGFQGRLQKSLPSLLRNVLTEESVVRESKSFARSTVDTMADKTQAV) lie on the Cytoplasmic side of the membrane. 6 positions are modified to phosphoserine: serine 314, serine 317, serine 327, serine 332, serine 334, and serine 338.

It belongs to the G-protein coupled receptor 1 family. Homodimer. May also form higher-order oligomers. Interacts (when phosphorylated) with ARRB1 and ARRB2; the interaction is associated with internalization of C5aR. Interacts (via N-terminal domain) with S.aureus chemotaxis inhibitory protein (CHIPS); the interaction blocks the receptor and may thus inhibit the immune response. In terms of processing, sulfation plays a critical role in the association of C5aR with C5a, but no significant role in the ability of the receptor to transduce a signal and mobilize calcium in response to a small peptide agonist. Sulfation at Tyr-14 is important for CHIPS binding. Phosphorylated on serine residues in response to C5a binding, resulting in internalization of the receptor and short-term desensitization to C5a.

The protein localises to the cell membrane. The protein resides in the cytoplasmic vesicle. Functionally, receptor for the chemotactic and inflammatory peptide anaphylatoxin C5a. The ligand interacts with at least two sites on the receptor: a high-affinity site on the extracellular N-terminus, and a second site in the transmembrane region which activates downstream signaling events. Receptor activation stimulates chemotaxis, granule enzyme release, intracellular calcium release and superoxide anion production. The polypeptide is C5a anaphylatoxin chemotactic receptor 1 (C5AR1) (Pan troglodytes (Chimpanzee)).